Reading from the N-terminus, the 231-residue chain is Isoprenyl transferase (231 aa).

Residue D14 is part of the active site. D14 is a Mg(2+) binding site. Substrate contacts are provided by residues 15 to 18, W19, R27, H31, and 59 to 61; these read GNGR and STE. N62 acts as the Proton acceptor in catalysis. Residues W63, R65, R176, and 182-184 contribute to the substrate site; that span reads RIS. E195 is a binding site for Mg(2+).

Belongs to the UPP synthase family. In terms of assembly, homodimer. The cofactor is Mg(2+).

Functionally, catalyzes the condensation of isopentenyl diphosphate (IPP) with allylic pyrophosphates generating different type of terpenoids. This Aquifex aeolicus (strain VF5) protein is Isoprenyl transferase.